The following is a 307-amino-acid chain: UDP-3-O-acyl-N-acetylglucosamine deacetylase (307 aa).

Positions 80, 239, and 243 each coordinate Zn(2+). His-266 acts as the Proton donor in catalysis.

This sequence belongs to the LpxC family. Requires Zn(2+) as cofactor.

The enzyme catalyses a UDP-3-O-[(3R)-3-hydroxyacyl]-N-acetyl-alpha-D-glucosamine + H2O = a UDP-3-O-[(3R)-3-hydroxyacyl]-alpha-D-glucosamine + acetate. Its pathway is glycolipid biosynthesis; lipid IV(A) biosynthesis; lipid IV(A) from (3R)-3-hydroxytetradecanoyl-[acyl-carrier-protein] and UDP-N-acetyl-alpha-D-glucosamine: step 2/6. In terms of biological role, catalyzes the hydrolysis of UDP-3-O-myristoyl-N-acetylglucosamine to form UDP-3-O-myristoylglucosamine and acetate, the committed step in lipid A biosynthesis. This chain is UDP-3-O-acyl-N-acetylglucosamine deacetylase, found in Neisseria meningitidis serogroup A / serotype 4A (strain DSM 15465 / Z2491).